The following is an 84-amino-acid chain: RNA-binding protein Hfq (84 aa).

The Sm domain maps to 9 to 69 (DRFLNILRTN…VSTIMPESFV (61 aa)).

The protein belongs to the Hfq family. Homohexamer.

Functionally, RNA chaperone that binds small regulatory RNA (sRNAs) and mRNAs to facilitate mRNA translational regulation in response to envelope stress, environmental stress and changes in metabolite concentrations. Also binds with high specificity to tRNAs. The chain is RNA-binding protein Hfq from Thermosipho africanus (strain TCF52B).